The following is a 79-amino-acid chain: Hematopoietic cell signal transducer (79 aa).

Positions 1–18 are cleaved as a signal peptide; sequence MAPPGHLLFLFLLPVAAS. Over 19–35 the chain is Extracellular; sequence QTNEGSCSGCGPLSLPL. A helical transmembrane segment spans residues 36-56; sequence LAGLVAADAVMSLLIVGVVFV. The Cytoplasmic segment spans residues 57–79; that stretch reads CMRLHSRPAQEDGRVYINMPGRG. Tyr-72 carries the phosphotyrosine modification. The segment at 72–74 is GRB2 binding site; the sequence is YIN. The segment at 72-75 is PIK3R1 binding site; it reads YINM.

It belongs to the DAP10 family. As to quaternary structure, homodimer; Disulfide-linked. Heterohexamer composed of four subunits of HCST/DAP10 and two subunits of KLRK1. Interacts (via transmembrane domain) with KLRK1 (via transmembrane domain); the interaction is required for KLRK1 NK cell surface and induces NK cell-mediated cytotoxicity. Interacts with PIK3R1 and GRB2. Interacts with CLEC5A. Forms an CLEC5A/TYROBP/HCST trimolecular complex depending almost solely on TYROBP. Interacts with CD300H. In terms of processing, phosphorylated; PIK3R1 and GRB2 associate specifically with tyrosine-phosphorylated HCST. Post-translationally, O-glycosylated.

It localises to the membrane. In terms of biological role, transmembrane adapter protein which associates with KLRK1 to form an activation receptor KLRK1-HCST in lymphoid and myeloid cells; this receptor plays a major role in triggering cytotoxicity against target cells expressing cell surface ligands such as MHC class I chain-related MICA and MICB, and UL16-binding proteins (ULBPs); these ligands are up-regulated by stress conditions and pathological state such as viral infection and tumor transformation. Functions as a docking site for PI3-kinase PIK3R1 and GRB2. Interaction of ULBPs with KLRK1-HCST triggers calcium mobilization and activation of the PIK3R1, MAP2K/ERK, and JAK2/STAT5 signaling pathways. Both PIK3R1 and GRB2 are required for full KLRK1-HCST-mediated activation and ultimate killing of target cells. In NK cells, KLRK1-HCST signaling directly induces cytotoxicity and enhances cytokine production initiated via DAP12/TYROBP-associated receptors. In T-cells, it provides primarily costimulation for TCR-induced signals. KLRK1-HCST receptor plays a role in immune surveillance against tumors and is required for cytolysis of tumors cells; indeed, melanoma cells that do not express KLRK1 ligands escape from immune surveillance mediated by NK cells. The sequence is that of Hematopoietic cell signal transducer (Hcst) from Rattus norvegicus (Rat).